The sequence spans 265 residues: Phosphatidylserine decarboxylase proenzyme (265 aa).

The active-site Schiff-base intermediate with substrate; via pyruvic acid is the Ser183. The residue at position 183 (Ser183) is a Pyruvic acid (Ser); by autocatalysis. The tract at residues Pro218 to Ser242 is disordered.

This sequence belongs to the phosphatidylserine decarboxylase family. PSD-A subfamily. As to quaternary structure, heterodimer of a large membrane-associated beta subunit and a small pyruvoyl-containing alpha subunit. Pyruvate serves as cofactor. Post-translationally, is synthesized initially as an inactive proenzyme. Formation of the active enzyme involves a self-maturation process in which the active site pyruvoyl group is generated from an internal serine residue via an autocatalytic post-translational modification. Two non-identical subunits are generated from the proenzyme in this reaction, and the pyruvate is formed at the N-terminus of the alpha chain, which is derived from the carboxyl end of the proenzyme. The post-translation cleavage follows an unusual pathway, termed non-hydrolytic serinolysis, in which the side chain hydroxyl group of the serine supplies its oxygen atom to form the C-terminus of the beta chain, while the remainder of the serine residue undergoes an oxidative deamination to produce ammonia and the pyruvoyl prosthetic group on the alpha chain.

Its subcellular location is the cell membrane. The catalysed reaction is a 1,2-diacyl-sn-glycero-3-phospho-L-serine + H(+) = a 1,2-diacyl-sn-glycero-3-phosphoethanolamine + CO2. It functions in the pathway phospholipid metabolism; phosphatidylethanolamine biosynthesis; phosphatidylethanolamine from CDP-diacylglycerol: step 2/2. Catalyzes the formation of phosphatidylethanolamine (PtdEtn) from phosphatidylserine (PtdSer). This chain is Phosphatidylserine decarboxylase proenzyme, found in Neisseria meningitidis serogroup C (strain 053442).